We begin with the raw amino-acid sequence, 164 residues long: 17.8 kDa heat shock protein (164 aa).

Residues Val20–Asp154 form the sHSP domain. Residues Gly68–Val93 are disordered.

This sequence belongs to the small heat shock protein (HSP20) family. As to quaternary structure, may form oligomeric structures.

It localises to the cytoplasm. The protein is 17.8 kDa heat shock protein (HSP17.8) of Oryza sativa subsp. japonica (Rice).